The primary structure comprises 364 residues: Fructose-bisphosphate aldolase B (364 aa).

Ala-2 is subject to N-acetylalanine. The residue at position 13 (Lys-13) is an N6-succinyllysine. Residue Ser-36 is modified to Phosphoserine. Residue Thr-39 is modified to Phosphothreonine. Beta-D-fructose 1,6-bisphosphate is bound at residue Arg-43. Ser-89 carries the phosphoserine modification. Thr-119 carries the phosphothreonine modification. Residue Lys-121 is modified to N6-succinyllysine. Ser-132 bears the Phosphoserine mark. Residue Glu-188 is the Proton acceptor of the active site. The active-site Schiff-base intermediate with dihydroxyacetone-P is the Lys-230. Phosphoserine is present on residues Ser-272, Ser-276, Ser-299, and Ser-301. 272-274 (SGG) serves as a coordination point for beta-D-fructose 1,6-bisphosphate. Position 304 (Arg-304) interacts with beta-D-fructose 1,6-bisphosphate. The residue at position 309 (Ser-309) is a Phosphoserine. Position 317 is an N6-succinyllysine (Lys-317).

This sequence belongs to the class I fructose-bisphosphate aldolase family. As to quaternary structure, homotetramer. Interacts with BBS1, BBS2, BBS4 and BBS7. Forms a ternary complex with G6PD and TP53; this interaction is direct.

Its subcellular location is the cytoplasm. The protein localises to the cytosol. It localises to the cytoskeleton. The protein resides in the microtubule organizing center. It is found in the centrosome. Its subcellular location is the centriolar satellite. It carries out the reaction beta-D-fructose 1,6-bisphosphate = D-glyceraldehyde 3-phosphate + dihydroxyacetone phosphate. The catalysed reaction is beta-D-fructose 1-phosphate = D-glyceraldehyde + dihydroxyacetone phosphate. The protein operates within carbohydrate degradation; glycolysis; D-glyceraldehyde 3-phosphate and glycerone phosphate from D-glucose: step 4/4. It participates in carbohydrate biosynthesis; gluconeogenesis. It functions in the pathway carbohydrate metabolism; fructose metabolism. Its function is as follows. Catalyzes the aldol cleavage of fructose 1,6-biphosphate to form two triosephosphates dihydroxyacetone phosphate and D-glyceraldehyde 3-phosphate in glycolysis as well as the reverse stereospecific aldol addition reaction in gluconeogenesis. In fructolysis, metabolizes fructose 1-phosphate derived from the phosphorylation of dietary fructose by fructokinase into dihydroxyacetone phosphate and D-glyceraldehyde. Acts as an adapter independently of its enzymatic activity, exerts a tumor suppressor role by stabilizing the ternary complex with G6PD and TP53 to inhibit G6PD activity and keep oxidative pentose phosphate metabolism in check. The chain is Fructose-bisphosphate aldolase B (Aldob) from Rattus norvegicus (Rat).